Reading from the N-terminus, the 71-residue chain is UPF0346 protein SP70585_0986 (71 aa).

This sequence belongs to the UPF0346 family.

This Streptococcus pneumoniae (strain 70585) protein is UPF0346 protein SP70585_0986.